A 143-amino-acid polypeptide reads, in one-letter code: Glycine cleavage system H protein 1 (143 aa).

Residues 26 to 107 (IYSVGMASIL…PYSSWIAKLK (82 aa)) enclose the Lipoyl-binding domain. K67 carries the N6-lipoyllysine modification.

The protein belongs to the GcvH family. As to quaternary structure, the glycine cleavage system is composed of four proteins: P, T, L and H. (R)-lipoate is required as a cofactor.

The glycine cleavage system catalyzes the degradation of glycine. The H protein shuttles the methylamine group of glycine from the P protein to the T protein. This chain is Glycine cleavage system H protein 1, found in Aquifex aeolicus (strain VF5).